The chain runs to 627 residues: Protein zyg-11 homolog A (627 aa).

LRR repeat units follow at residues 123–146 (LPNLGSLDISNTLVTNISALLSCK), 203–227 (LPNLTSLDISGGTDVTDQAVESFLQ), and 409–432 (ITSILALKLSPEEMGQLQEELIMA).

Belongs to the zyg-11 family.

Probably acts as a target recruitment subunit in an E3 ubiquitin ligase complex ZYGA-CUL2-elongin BC. The polypeptide is Protein zyg-11 homolog A (Zyg11a) (Mus musculus (Mouse)).